The sequence spans 83 residues: Large ribosomal subunit protein bL31B (83 aa).

This sequence belongs to the bacterial ribosomal protein bL31 family. Type B subfamily. Part of the 50S ribosomal subunit.

The protein is Large ribosomal subunit protein bL31B of Bacteroides fragilis (strain ATCC 25285 / DSM 2151 / CCUG 4856 / JCM 11019 / LMG 10263 / NCTC 9343 / Onslow / VPI 2553 / EN-2).